A 163-amino-acid chain; its full sequence is Arginine repressor (163 aa).

The protein belongs to the ArgR family.

The protein resides in the cytoplasm. The protein operates within amino-acid biosynthesis; L-arginine biosynthesis [regulation]. Functionally, regulates arginine biosynthesis genes. This Corynebacterium diphtheriae (strain ATCC 700971 / NCTC 13129 / Biotype gravis) protein is Arginine repressor.